Reading from the N-terminus, the 120-residue chain is uncharacterized protein (120 aa).

The next 2 helical transmembrane spans lie at 26-46 (PSTSLTIMLSVIAIRILPAGM) and 57-77 (LLFASFLLLSSFHYPITLTLV).

It is found in the membrane. This is an uncharacterized protein from Saccharomyces cerevisiae (strain ATCC 204508 / S288c) (Baker's yeast).